Here is a 387-residue protein sequence, read N- to C-terminus: Alpha-maltose-1-phosphate synthase (387 aa).

Belongs to the glycosyltransferase group 1 family.

The enzyme catalyses ADP-alpha-D-glucose + alpha-D-glucose 1-phosphate = alpha-maltose 1-phosphate + ADP + H(+). Its pathway is capsule biogenesis; capsule polysaccharide biosynthesis. It participates in glycan biosynthesis; glycogen biosynthesis. Its function is as follows. Involved in the biosynthesis of the maltose-1-phosphate (M1P) building block required for alpha-glucan production by the key enzyme GlgE. Catalyzes the formation of an alpha-1,4 linkage between glucose from ADP-glucose and glucose 1-phosphate (G1P) to yield maltose-1-phosphate (M1P). In Mycobacterium tuberculosis (strain CDC 1551 / Oshkosh), this protein is Alpha-maltose-1-phosphate synthase.